The primary structure comprises 159 residues: Phosphopantetheine adenylyltransferase (159 aa).

Position 10 (Thr-10) interacts with substrate. ATP is bound by residues 10 to 11 and His-18; that span reads TF. Lys-42, Met-74, and Arg-88 together coordinate substrate. ATP contacts are provided by residues 89-91, Glu-99, and 124-130; these read GLR and WSFISSS.

It belongs to the bacterial CoaD family. As to quaternary structure, homohexamer. Mg(2+) serves as cofactor.

The protein localises to the cytoplasm. It catalyses the reaction (R)-4'-phosphopantetheine + ATP + H(+) = 3'-dephospho-CoA + diphosphate. Its pathway is cofactor biosynthesis; coenzyme A biosynthesis; CoA from (R)-pantothenate: step 4/5. Functionally, reversibly transfers an adenylyl group from ATP to 4'-phosphopantetheine, yielding dephospho-CoA (dPCoA) and pyrophosphate. This is Phosphopantetheine adenylyltransferase from Yersinia pseudotuberculosis serotype O:3 (strain YPIII).